A 491-amino-acid chain; its full sequence is UDP-N-acetylmuramate--L-alanine ligase (491 aa).

Glycine 126 to threonine 132 is an ATP binding site.

This sequence belongs to the MurCDEF family.

Its subcellular location is the cytoplasm. The enzyme catalyses UDP-N-acetyl-alpha-D-muramate + L-alanine + ATP = UDP-N-acetyl-alpha-D-muramoyl-L-alanine + ADP + phosphate + H(+). The protein operates within cell wall biogenesis; peptidoglycan biosynthesis. Its function is as follows. Cell wall formation. In Escherichia coli O7:K1 (strain IAI39 / ExPEC), this protein is UDP-N-acetylmuramate--L-alanine ligase.